Here is a 512-residue protein sequence, read N- to C-terminus: Cytochrome P450 77A4 (512 aa).

The helical transmembrane segment at 9–29 (PTSLDFTFFAIIISGFVFIIT) threads the bilayer. Residue cysteine 456 coordinates heme.

Belongs to the cytochrome P450 family. It depends on heme as a cofactor.

Its subcellular location is the membrane. Functionally, catalyzes the epoxidation of physiological unsaturated fatty acids in vitro. Can use laurate, oleate, linoleate, linolenate and vernolate as substrate. The protein is Cytochrome P450 77A4 (CYP77A4) of Arabidopsis thaliana (Mouse-ear cress).